The chain runs to 895 residues: Androgen receptor (895 aa).

The tract at residues 1–533 (MEVQLGLGRV…PIDYYFPPQK (533 aa)) is modulating. Positions 1–562 (MEVQLGLGRV…GSCKVFFKRA (562 aa)) are interaction with ZNF318. Disordered regions lie at residues 33 to 150 (VIQN…LSLL) and 175 to 211 (QLLQ…YLGG). Composition is skewed to low complexity over residues 44–81 (AASA…GSPQ) and 175–200 (QLLQ…ASGA). At serine 65 the chain carries Phosphoserine; by CDK9. A Phosphoserine modification is found at serine 79. Residues 201 to 211 (PTSSKDNYLGG) are compositionally biased toward polar residues. Tyrosine 208 bears the Phosphotyrosine; by CSK mark. Serine 241 bears the Phosphoserine mark. Tyrosine 252 is modified (phosphotyrosine; by CSK and TNK2). 4 positions are modified to phosphotyrosine; by CSK: tyrosine 292, tyrosine 331, tyrosine 342, and tyrosine 347. The residue at position 348 (tyrosine 348) is a Phosphotyrosine; by CSK and TNK2. A Glycyl lysine isopeptide (Lys-Gly) (interchain with G-Cter in SUMO) cross-link involves residue lysine 371. The residue at position 378 (tyrosine 378) is a Phosphotyrosine; by CSK. Lysine 496 participates in a covalent cross-link: Glycyl lysine isopeptide (Lys-Gly) (interchain with G-Cter in SUMO). Phosphotyrosine; by CSK is present on residues tyrosine 510 and tyrosine 527. The segment at 527-894 (YYFPPQKTCL…GKVKPIYFHT (368 aa)) is interaction with LPXN. The segment at residues 534–607 (TCLICGDEAS…AGMTLGARKL (74 aa)) is a DNA-binding region (nuclear receptor). 2 NR C4-type zinc fingers span residues 535 to 555 (CLIC…CGSC) and 571 to 595 (CASR…LRKC). The interaction with HIPK3 stretch occupies residues 547–637 (YGALTCGSCK…TEETAQKLTV (91 aa)). The interval 567–894 (QKYLCASRND…GKVKPIYFHT (328 aa)) is interaction with CCAR1. Residues 600 to 894 (MTLGARKLKK…GKVKPIYFHT (295 aa)) are interaction with KAT7. Phosphoserine; by STK4/MST1 is present on serine 626. One can recognise an NR LBD domain in the interval 644 to 875 (ECQPIFLNVL…DFPEMMAEII (232 aa)). Asparagine 681 and arginine 728 together coordinate 17beta-hydroxy-5alpha-androstan-3-one. Residues lysine 821 and lysine 823 each participate in a glycyl lysine isopeptide (Lys-Gly) (interchain with G-Cter in ubiquitin) cross-link. Threonine 853 provides a ligand contact to 17beta-hydroxy-5alpha-androstan-3-one. Phosphotyrosine; by CSK is present on tyrosine 891.

This sequence belongs to the nuclear hormone receptor family. NR3 subfamily. Binds DNA as a homodimer. Part of a ternary complex containing AR, EFCAB6/DJBP and PARK7. Interacts with HIPK3 and NR0B2 in the presence of androgen. The ligand binding domain interacts with KAT7/HBO1 in the presence of dihydrotestosterone. Interacts with EFCAB6/DJBP, PQBP1, RANBP9, RBAK, SPDEF, SRA1, TGFB1I1 and RREB1. Interacts with ZMIZ1/ZIMP10 and ZMIZ2/ZMIP7 which both enhance its transactivation activity. Interacts with SLC30A9 and RAD54L2/ARIP4. Interacts with MACROD1 (via macro domain). Interacts via the ligand-binding domain with LXXLL and FXXLF motifs from NCOA1, NCOA2, NCOA3 and MAGEA11. Interacts (via nuclear receptor DNA binding domain and nuclear receptor ligand binding domain) with NCOA4. The AR N-terminal poly-Gln region binds Ran resulting in enhancement of AR-mediated transactivation. Ran-binding decreases as the poly-Gln length increases. Interacts with HIP1 (via coiled coil domain). Interacts (via ligand-binding domain) with TRIM68. Interacts with TNK2. Interacts with USP26. Interacts with RNF6. Interacts (regulated by RNF6 probably through polyubiquitination) with RNF14; regulates AR transcriptional activity. Interacts with PRMT2 and TRIM24. Interacts with RACK1. Interacts with RANBP10; this interaction enhances dihydrotestosterone-induced AR transcriptional activity. Interacts with PRPF6 in a hormone-independent way; this interaction enhances dihydrotestosterone-induced AR transcriptional activity. Interacts with STK4/MST1. Interacts with ZIPK/DAPK3. Interacts with LPXN. Interacts with MAK. Part of a complex containing AR, MAK and NCOA3. Interacts with CRY1. Interacts with CCAR1 and GATA2. Interacts with ZNF318. Interacts with BUD31. Interacts with ARID4A. Interacts with ARID4B. Interacts (via NR LBD domain) with ZBTB7A; the interaction is direct and androgen-dependent. Interacts with NCOR1. Interacts with NCOR2. Interacts with CRY2 in a ligand-dependent manner. Post-translationally, phosphorylated in prostate cancer cells in response to several growth factors including EGF. Phosphorylation is induced by c-Src kinase (CSK). Tyr-510 is one of the major phosphorylation sites and an increase in phosphorylation and Src kinase activity is associated with prostate cancer progression. Phosphorylation by TNK2 enhances the DNA-binding and transcriptional activity. Phosphorylation at Ser-65 by CDK9 regulates AR promoter selectivity and cell growth. Sumoylated on Lys-371 (major) and Lys-496. Ubiquitinated. Deubiquitinated by USP26. 'Lys-6' and 'Lys-27'-linked polyubiquitination by RNF6 modulates AR transcriptional activity and specificity. In terms of processing, palmitoylated by ZDHHC7 and ZDHHC21. Palmitoylation is required for plasma membrane targeting and for rapid intracellular signaling via ERK and AKT kinases and cAMP generation.

The protein localises to the nucleus. It localises to the cytoplasm. Its function is as follows. Steroid hormone receptors are ligand-activated transcription factors that regulate eukaryotic gene expression and affect cellular proliferation and differentiation in target tissues. Transcription factor activity is modulated by bound coactivator and corepressor proteins like ZBTB7A that recruits NCOR1 and NCOR2 to the androgen response elements/ARE on target genes, negatively regulating androgen receptor signaling and androgen-induced cell proliferation. Transcription activation is also down-regulated by NR0B2. Activated, but not phosphorylated, by HIPK3 and ZIPK/DAPK3. This Macaca fascicularis (Crab-eating macaque) protein is Androgen receptor (AR).